A 474-amino-acid chain; its full sequence is Aspartyl/glutamyl-tRNA(Asn/Gln) amidotransferase subunit B (474 aa).

This sequence belongs to the GatB/GatE family. GatB subfamily. Heterotrimer of A, B and C subunits.

The catalysed reaction is L-glutamyl-tRNA(Gln) + L-glutamine + ATP + H2O = L-glutaminyl-tRNA(Gln) + L-glutamate + ADP + phosphate + H(+). It catalyses the reaction L-aspartyl-tRNA(Asn) + L-glutamine + ATP + H2O = L-asparaginyl-tRNA(Asn) + L-glutamate + ADP + phosphate + 2 H(+). In terms of biological role, allows the formation of correctly charged Asn-tRNA(Asn) or Gln-tRNA(Gln) through the transamidation of misacylated Asp-tRNA(Asn) or Glu-tRNA(Gln) in organisms which lack either or both of asparaginyl-tRNA or glutaminyl-tRNA synthetases. The reaction takes place in the presence of glutamine and ATP through an activated phospho-Asp-tRNA(Asn) or phospho-Glu-tRNA(Gln). This chain is Aspartyl/glutamyl-tRNA(Asn/Gln) amidotransferase subunit B, found in Campylobacter curvus (strain 525.92).